An 84-amino-acid polypeptide reads, in one-letter code: Phosphoribosylformylglycinamidine synthase subunit PurS (84 aa).

It belongs to the PurS family. Homodimer. Part of the FGAM synthase complex composed of 1 PurL, 1 PurQ and 2 PurS subunits.

Its subcellular location is the cytoplasm. It carries out the reaction N(2)-formyl-N(1)-(5-phospho-beta-D-ribosyl)glycinamide + L-glutamine + ATP + H2O = 2-formamido-N(1)-(5-O-phospho-beta-D-ribosyl)acetamidine + L-glutamate + ADP + phosphate + H(+). The protein operates within purine metabolism; IMP biosynthesis via de novo pathway; 5-amino-1-(5-phospho-D-ribosyl)imidazole from N(2)-formyl-N(1)-(5-phospho-D-ribosyl)glycinamide: step 1/2. In terms of biological role, part of the phosphoribosylformylglycinamidine synthase complex involved in the purines biosynthetic pathway. Catalyzes the ATP-dependent conversion of formylglycinamide ribonucleotide (FGAR) and glutamine to yield formylglycinamidine ribonucleotide (FGAM) and glutamate. The FGAM synthase complex is composed of three subunits. PurQ produces an ammonia molecule by converting glutamine to glutamate. PurL transfers the ammonia molecule to FGAR to form FGAM in an ATP-dependent manner. PurS interacts with PurQ and PurL and is thought to assist in the transfer of the ammonia molecule from PurQ to PurL. The sequence is that of Phosphoribosylformylglycinamidine synthase subunit PurS from Methanothermobacter thermautotrophicus (strain ATCC 29096 / DSM 1053 / JCM 10044 / NBRC 100330 / Delta H) (Methanobacterium thermoautotrophicum).